Here is a 328-residue protein sequence, read N- to C-terminus: Diacetylchitobiose uptake system permease protein DasB (328 aa).

The segment at 1–27 (MTVQTERPPSGPSDVRKADGGGTGGTR) is disordered. The next 6 membrane-spanning stretches (helical) occupy residues 36 to 56 (ALAP…LLGW), 104 to 124 (IIFT…IGLL), 134 to 154 (FVLM…ATTV), 188 to 208 (FSTF…FVAI), 247 to 267 (FLYA…VQVY), and 297 to 317 (MGAA…AYYL). One can recognise an ABC transmembrane type-1 domain in the interval 100–316 (TVRSIIFTAV…LILLGLTAYY (217 aa)).

It belongs to the binding-protein-dependent transport system permease family. As to quaternary structure, the complex is composed of two ATP-binding proteins (MsiK), two transmembrane proteins (DasB and DasC) and a solute-binding protein (DasA).

The protein localises to the cell membrane. Functionally, part of the ABC transporter complex DasABC-MsiK involved in N,N'-diacetylchitobiose ((GlcNAc)2) uptake. Responsible for the translocation of the substrate across the membrane. The sequence is that of Diacetylchitobiose uptake system permease protein DasB from Streptomyces coelicolor (strain ATCC BAA-471 / A3(2) / M145).